Here is a 209-residue protein sequence, read N- to C-terminus: Small ribosomal subunit protein uS4 (209 aa).

The 62-residue stretch at 99–160 (RRLDNVVYRL…GSKEMTLLGQ (62 aa)) folds into the S4 RNA-binding domain.

It belongs to the universal ribosomal protein uS4 family. As to quaternary structure, part of the 30S ribosomal subunit. Contacts protein S5. The interaction surface between S4 and S5 is involved in control of translational fidelity.

One of the primary rRNA binding proteins, it binds directly to 16S rRNA where it nucleates assembly of the body of the 30S subunit. In terms of biological role, with S5 and S12 plays an important role in translational accuracy. This is Small ribosomal subunit protein uS4 from Koribacter versatilis (strain Ellin345).